Here is a 167-residue protein sequence, read N- to C-terminus: Leptin (167 aa).

A signal peptide spans 1–21 (MRCGSLCRFLWLWSCLSYIEA). A disulfide bond links C117 and C167.

It belongs to the leptin family.

The protein localises to the secreted. Functionally, key player in the regulation of energy balance and body weight control. Once released into the circulation, has central and peripheral effects by binding LEPR, found in many tissues, which results in the activation of several major signaling pathways. In the hypothalamus, acts as an appetite-regulating factor that induces a decrease in food intake and an increase in energy consumption by inducing anorexinogenic factors and suppressing orexigenic neuropeptides, also regulates bone mass and secretion of hypothalamo-pituitary-adrenal hormones. In the periphery, increases basal metabolism, influences reproductive function, regulates pancreatic beta-cell function and insulin secretion, is pro-angiogenic for endothelial cell and affects innate and adaptive immunity. In the arcuate nucleus of the hypothalamus, activates by depolarization POMC neurons inducing FOS and SOCS3 expression to release anorexigenic peptides and inhibits by hyperpolarization NPY neurons inducing SOCS3 with a consequent reduction on release of orexigenic peptides. In addition to its known satiety inducing effect, has a modulatory role in nutrient absorption. In the intestine, reduces glucose absorption by enterocytes by activating PKC and leading to a sequential activation of p38, PI3K and ERK signaling pathways which exerts an inhibitory effect on glucose absorption. Acts as a growth factor on certain tissues, through the activation of different signaling pathways increases expression of genes involved in cell cycle regulation such as CCND1, via JAK2-STAT3 pathway, or VEGFA, via MAPK1/3 and PI3K-AKT1 pathways. May also play an apoptotic role via JAK2-STAT3 pathway and up-regulation of BIRC5 expression. Pro-angiogenic, has mitogenic activity on vascular endothelial cells and plays a role in matrix remodeling by regulating the expression of matrix metalloproteinases (MMPs) and tissue inhibitors of metalloproteinases (TIMPs). In innate immunity, modulates the activity and function of neutrophils by increasing chemotaxis and the secretion of oxygen radicals. Increases phagocytosis by macrophages and enhances secretion of pro-inflammatory mediators. Increases cytotoxic ability of NK cells. Plays a pro-inflammatory role, in synergy with IL1B, by inducing NOS2 which promotes the production of IL6, IL8 and Prostaglandin E2, through a signaling pathway that involves JAK2, PI3K, MAP2K1/MEK1 and MAPK14/p38. In adaptive immunity, promotes the switch of memory T-cells towards T helper-1 cell immune responses. Increases CD4(+)CD25(-) T-cell proliferation and reduces autophagy during TCR (T-cell receptor) stimulation, through MTOR signaling pathway activation and BCL2 up-regulation. The chain is Leptin (LEP) from Phoca vitulina (Harbor seal).